A 360-amino-acid chain; its full sequence is Membrane-bound lytic murein transglycosylase C (360 aa).

The first 16 residues, 1 to 16 (MKKFFALALVAPLLIS), serve as a signal peptide directing secretion. Residue Cys-17 is the site of N-palmitoyl cysteine attachment. Cys-17 is lipidated: S-diacylglycerol cysteine.

Belongs to the transglycosylase Slt family.

It is found in the cell outer membrane. The enzyme catalyses Exolytic cleavage of the (1-&gt;4)-beta-glycosidic linkage between N-acetylmuramic acid (MurNAc) and N-acetylglucosamine (GlcNAc) residues in peptidoglycan, from either the reducing or the non-reducing ends of the peptidoglycan chains, with concomitant formation of a 1,6-anhydrobond in the MurNAc residue.. In terms of biological role, murein-degrading enzyme. May play a role in recycling of muropeptides during cell elongation and/or cell division. The chain is Membrane-bound lytic murein transglycosylase C from Citrobacter koseri (strain ATCC BAA-895 / CDC 4225-83 / SGSC4696).